The sequence spans 122 residues: Large ribosomal subunit protein uL29B (122 aa).

Residues 10–69 (QLGIKQIEERAAEIKAELAALRQKKNSGDVGANDIKTAKKNLARALTVRREKILEELVEA) are a coiled coil.

The protein belongs to the universal ribosomal protein uL29 family. As to quaternary structure, component of the large ribosomal subunit.

The protein localises to the cytoplasm. This is Large ribosomal subunit protein uL29B (RPL35C) from Encephalitozoon cuniculi (strain GB-M1) (Microsporidian parasite).